A 333-amino-acid chain; its full sequence is Ketol-acid reductoisomerase (NADP(+)) (333 aa).

In terms of domain architecture, KARI N-terminal Rossmann spans 1–179 (MFYDDDADLT…GGTRAGVIKT (179 aa)). Residues 22–25 (YGSQ), lysine 45, serine 48, serine 50, and 80–83 (DTAQ) each bind NADP(+). Residue histidine 105 is part of the active site. Glycine 131 lines the NADP(+) pocket. The 146-residue stretch at 180–325 (TFKDETETDL…KRLRDLMSWV (146 aa)) folds into the KARI C-terminal knotted domain. Mg(2+) contacts are provided by aspartate 188, glutamate 192, glutamate 224, and glutamate 228. Serine 249 is a binding site for substrate.

It belongs to the ketol-acid reductoisomerase family. Requires Mg(2+) as cofactor.

It carries out the reaction (2R)-2,3-dihydroxy-3-methylbutanoate + NADP(+) = (2S)-2-acetolactate + NADPH + H(+). The catalysed reaction is (2R,3R)-2,3-dihydroxy-3-methylpentanoate + NADP(+) = (S)-2-ethyl-2-hydroxy-3-oxobutanoate + NADPH + H(+). It functions in the pathway amino-acid biosynthesis; L-isoleucine biosynthesis; L-isoleucine from 2-oxobutanoate: step 2/4. It participates in amino-acid biosynthesis; L-valine biosynthesis; L-valine from pyruvate: step 2/4. Its function is as follows. Involved in the biosynthesis of branched-chain amino acids (BCAA). Catalyzes an alkyl-migration followed by a ketol-acid reduction of (S)-2-acetolactate (S2AL) to yield (R)-2,3-dihydroxy-isovalerate. In the isomerase reaction, S2AL is rearranged via a Mg-dependent methyl migration to produce 3-hydroxy-3-methyl-2-ketobutyrate (HMKB). In the reductase reaction, this 2-ketoacid undergoes a metal-dependent reduction by NADPH to yield (R)-2,3-dihydroxy-isovalerate. The polypeptide is Ketol-acid reductoisomerase (NADP(+)) (Mycobacterium avium).